We begin with the raw amino-acid sequence, 511 residues long: Bifunctional purine biosynthesis protein PurH (511 aa).

Residues Met1–Val145 enclose the MGS-like domain.

The protein belongs to the PurH family.

It catalyses the reaction (6R)-10-formyltetrahydrofolate + 5-amino-1-(5-phospho-beta-D-ribosyl)imidazole-4-carboxamide = 5-formamido-1-(5-phospho-D-ribosyl)imidazole-4-carboxamide + (6S)-5,6,7,8-tetrahydrofolate. The enzyme catalyses IMP + H2O = 5-formamido-1-(5-phospho-D-ribosyl)imidazole-4-carboxamide. It functions in the pathway purine metabolism; IMP biosynthesis via de novo pathway; 5-formamido-1-(5-phospho-D-ribosyl)imidazole-4-carboxamide from 5-amino-1-(5-phospho-D-ribosyl)imidazole-4-carboxamide (10-formyl THF route): step 1/1. The protein operates within purine metabolism; IMP biosynthesis via de novo pathway; IMP from 5-formamido-1-(5-phospho-D-ribosyl)imidazole-4-carboxamide: step 1/1. This Bacillus cereus (strain B4264) protein is Bifunctional purine biosynthesis protein PurH.